The chain runs to 866 residues: N-alpha-acetyltransferase 15, NatA auxiliary subunit (866 aa).

TPR repeat units lie at residues 46 to 79, 80 to 113, 148 to 184, and 224 to 257; these read GETL…DLKS, HVCW…DKDN, RASW…SPDK, and LAVE…NPEN. Lysine 262 is subject to N6-acetyllysine. Serine 302 is subject to Phosphoserine. TPR repeat units follow at residues 374–407, 409–441, and 485–522; these read LWVQ…TPTL, ELFL…DTAD, and MWFQ…TDDQ. Positions 500–866 are interaction with HYPK; the sequence is KFGEALKKCY…AEAEELANEI (367 aa). Residues serine 537 and serine 588 each carry the phosphoserine modification. Positions 579 to 594 are enriched in basic and acidic residues; it reads EHEADTANMSDKELKK. The tract at residues 579–642 is disordered; it reads EHEADTANMS…EEIGGPKEEL (64 aa). Residues 595–604 show a composition bias toward basic residues; the sequence is LRNKQRRAQK. The span at 606–621 shows a compositional bias: basic and acidic residues; it reads AQIEEEKKNAEKEKQQ. The TPR 8 repeat unit spans residues 672–705; the sequence is IETHLFAFEIYFRKEKFLLMLQSVKRAFAIDSSH. N6-acetyllysine occurs at positions 735 and 756. 2 positions are modified to phosphoserine: serine 855 and serine 856.

As to quaternary structure, component of the N-terminal acetyltransferase A (NatA) complex composed of NAA10 or probably NAA11 and NAA15. Interacts with XRCC6, NAA50 and XRCC5. Associates with HYPK when in a complex with NAA10. Interaction with HYPK reduces the capacity to interact with NAA50. Post-translationally, cleaved by caspases during apoptosis.

It is found in the cytoplasm. It localises to the nucleus. Auxillary subunit of the N-terminal acetyltransferase A (NatA) complex which displays alpha (N-terminal) acetyltransferase activity. The NAT activity may be important for vascular, hematopoietic and neuronal growth and development. Required to control retinal neovascularization in adult ocular endothelial cells. In complex with XRCC6 and XRCC5 (Ku80), up-regulates transcription from the osteocalcin promoter. This chain is N-alpha-acetyltransferase 15, NatA auxiliary subunit (NAA15), found in Pongo abelii (Sumatran orangutan).